Reading from the N-terminus, the 353-residue chain is Glycerol-3-phosphate dehydrogenase [NAD(P)+] (353 aa).

Trp11, Arg40, and Lys115 together coordinate NADPH. Residues Lys115, Gly156, and Ser158 each coordinate sn-glycerol 3-phosphate. Ala160 is an NADPH binding site. Lys211, Asp264, Ser274, Arg275, and Asn276 together coordinate sn-glycerol 3-phosphate. Residue Lys211 is the Proton acceptor of the active site. Arg275 contributes to the NADPH binding site. 2 residues coordinate NADPH: Val299 and Glu301.

It belongs to the NAD-dependent glycerol-3-phosphate dehydrogenase family.

It localises to the cytoplasm. The enzyme catalyses sn-glycerol 3-phosphate + NAD(+) = dihydroxyacetone phosphate + NADH + H(+). It carries out the reaction sn-glycerol 3-phosphate + NADP(+) = dihydroxyacetone phosphate + NADPH + H(+). It participates in membrane lipid metabolism; glycerophospholipid metabolism. Catalyzes the reduction of the glycolytic intermediate dihydroxyacetone phosphate (DHAP) to sn-glycerol 3-phosphate (G3P), the key precursor for phospholipid synthesis. The protein is Glycerol-3-phosphate dehydrogenase [NAD(P)+] of Polaromonas sp. (strain JS666 / ATCC BAA-500).